Consider the following 520-residue polypeptide: Ribonuclease Y (520 aa).

The chain crosses the membrane as a helical span at residues 1-21 (MDIITIIIAVIAGIGGGFGIS). The KH domain maps to 210–276 (CVSVFNIESD…RLALHKLVTD (67 aa)). One can recognise an HD domain in the interval 336-429 (LLQHSREVSK…VQVCDAISGA (94 aa)).

Belongs to the RNase Y family.

It localises to the cell membrane. In terms of biological role, endoribonuclease that initiates mRNA decay. The sequence is that of Ribonuclease Y from Flavobacterium psychrophilum (strain ATCC 49511 / DSM 21280 / CIP 103535 / JIP02/86).